Consider the following 369-residue polypeptide: Nuclear pore complex-interacting protein family member A2 (369 aa).

The disordered stretch occupies residues 325–346 (KTPPECLLTPLPPSAPPSADDN).

This sequence belongs to the NPIP family.

The polypeptide is Nuclear pore complex-interacting protein family member A2 (NPIPA2) (Homo sapiens (Human)).